A 562-amino-acid chain; its full sequence is Vacuolar basic amino acid transporter 1 (562 aa).

Residues 1–30 (MQTLDETSNLLPPPEEAEAPPLEQKFHEYN) lie on the Vacuolar side of the membrane. A helical membrane pass occupies residues 31-51 (LALPKFPILFSLWLGSFLSSL). Residues 52–100 (DSTIVANIMNRVAEEFSESSKKQWIATSFLLTNTAFQPLYGKLSDITGR) lie on the Cytoplasmic side of the membrane. A helical membrane pass occupies residues 101 to 121 (KSALLTAQFFFGLGCLLTCFA). Residues 122-131 (RNVTEFSIAR) lie on the Vacuolar side of the membrane. Asn123 is a glycosylation site (N-linked (GlcNAc...) asparagine). The helical transmembrane segment at 132–152 (AICGIGAGGLNAISSIAVSDI) threads the bilayer. The Cytoplasmic portion of the chain corresponds to 153 to 166 (CTARERGVYQGYAN). Residues 167–187 (IVFGFGQLLGAPLGGVFIETI) form a helical membrane-spanning segment. At 188-190 (GWR) the chain is on the vacuolar side. The helical transmembrane segment at 191-211 (ALFGIQVPVIMLCSVLAIKNI) threads the bilayer. Residues 212-232 (NIKLFHVPPMKERYTLKNLSR) are Cytoplasmic-facing. A helical transmembrane segment spans residues 233–253 (IDIFGSLSLVATISGVLFLCS). The Vacuolar segment spans residues 254 to 255 (SQ). Residues 256-276 (LNKLYLALFTIGSFIVFILVE) form a helical membrane-spanning segment. Residues 277–292 (RYYATEKILPFELLTR) are Cytoplasmic-facing. Residues 293 to 313 (SFCLSSAVTVISSFVVFGEIF) form a helical membrane-spanning segment. Residues 314-331 (RSPIYLQLLQNISVTKTG) are Vacuolar-facing. Asn324 carries N-linked (GlcNAc...) asparagine glycosylation. A helical transmembrane segment spans residues 332–352 (LFLIFPSISVAVGSLVTGWVL). Residues 353 to 365 (RNTKINLAHCAYQ) lie on the Cytoplasmic side of the membrane. Residues 366 to 386 (IIFGGMIMQLLGLGLGYFLLS) form a helical membrane-spanning segment. Residues 387 to 419 (HLNPDYTIYDMLESITFRSNSIWWKLIYVFASV) lie on the Vacuolar side of the membrane. Residues 420–440 (LVSFGYACLLVATLVSIVFTV) traverse the membrane as a helical segment. The Cytoplasmic segment spans residues 441-448 (EKSQQGTM). A helical transmembrane segment spans residues 449–469 (TGVFYLWRSIGNVLGASLTLV). At 470-528 (SYENSLSSMLWNYMFKTKRDDEYHFTKKQYYSLINDSSYLRGPNFPTDIFVRILDVYKK) the chain is on the vacuolar side. Residue Asn504 is glycosylated (N-linked (GlcNAc...) asparagine). Residues 529 to 549 (AFLISYIPNIALAAVGIVLSL) form a helical membrane-spanning segment. Over 550–562 (YLVKHTYKRSSSS) the chain is Cytoplasmic.

The protein belongs to the major facilitator superfamily.

It localises to the vacuole membrane. In terms of biological role, transporter required for vacuolar uptake of at least histidine and lysine. This chain is Vacuolar basic amino acid transporter 1 (VBA1), found in Saccharomyces cerevisiae (strain ATCC 204508 / S288c) (Baker's yeast).